The primary structure comprises 751 residues: Photosystem I P700 chlorophyll a apoprotein A1 (751 aa).

Transmembrane regions (helical) follow at residues 73–96 (VFSA…FHGA), 159–182 (LYST…FHFH), 198–222 (LNHH…HVSL), 294–312 (TAHH…GHMY), 349–372 (WHAQ…HHQY), 388–414 (LSLF…IFMI), 436–458 (AIIS…LYIH), and 533–551 (FLVH…LILL). [4Fe-4S] cluster is bound by residues cysteine 575 and cysteine 584. 2 helical membrane passes run 591 to 612 (HVFL…HFSW) and 665 to 687 (LSAY…MFLF). Position 676 (histidine 676) interacts with chlorophyll a'. Residues methionine 684 and tyrosine 692 each coordinate chlorophyll a. Tryptophan 693 contributes to the phylloquinone binding site. Residues 725 to 745 (AVGVAHYLLGGIATTWSFFLA) form a helical membrane-spanning segment.

It belongs to the PsaA/PsaB family. In terms of assembly, the PsaA/B heterodimer binds the P700 chlorophyll special pair and subsequent electron acceptors. PSI consists of a core antenna complex that captures photons, and an electron transfer chain that converts photonic excitation into a charge separation. The eukaryotic PSI reaction center is composed of at least 11 subunits. Requires P700 is a chlorophyll a/chlorophyll a' dimer, A0 is one or more chlorophyll a, A1 is one or both phylloquinones and FX is a shared 4Fe-4S iron-sulfur center. as cofactor.

The protein localises to the plastid. Its subcellular location is the chloroplast thylakoid membrane. The catalysed reaction is reduced [plastocyanin] + hnu + oxidized [2Fe-2S]-[ferredoxin] = oxidized [plastocyanin] + reduced [2Fe-2S]-[ferredoxin]. Functionally, psaA and PsaB bind P700, the primary electron donor of photosystem I (PSI), as well as the electron acceptors A0, A1 and FX. PSI is a plastocyanin/cytochrome c6-ferredoxin oxidoreductase, converting photonic excitation into a charge separation, which transfers an electron from the donor P700 chlorophyll pair to the spectroscopically characterized acceptors A0, A1, FX, FA and FB in turn. Oxidized P700 is reduced on the lumenal side of the thylakoid membrane by plastocyanin or cytochrome c6. This Tupiella akineta (Green alga) protein is Photosystem I P700 chlorophyll a apoprotein A1.